The following is a 127-amino-acid chain: MPTINQLVRKERKKVIDKSKSPALKKCPQRRGVCTRVYTTTPKKPNSALRKVAKVRLTTGFEVISYIGGEGHNLQEHSIVLVRGGRVKDLPGVKYHIVRGALDTAGVNNRTVSRSKYGTKRPKAAKK.

Residue D89 is modified to 3-methylthioaspartic acid.

The protein belongs to the universal ribosomal protein uS12 family. Part of the 30S ribosomal subunit. Contacts proteins S8 and S17. May interact with IF1 in the 30S initiation complex.

In terms of biological role, with S4 and S5 plays an important role in translational accuracy. Interacts with and stabilizes bases of the 16S rRNA that are involved in tRNA selection in the A site and with the mRNA backbone. Located at the interface of the 30S and 50S subunits, it traverses the body of the 30S subunit contacting proteins on the other side and probably holding the rRNA structure together. The combined cluster of proteins S8, S12 and S17 appears to hold together the shoulder and platform of the 30S subunit. The polypeptide is Small ribosomal subunit protein uS12 (Aliarcobacter butzleri (strain RM4018) (Arcobacter butzleri)).